The following is a 359-amino-acid chain: Transaldolase (359 aa).

The Schiff-base intermediate with substrate role is filled by K139.

The protein belongs to the transaldolase family. Type 2 subfamily.

The protein resides in the cytoplasm. It catalyses the reaction D-sedoheptulose 7-phosphate + D-glyceraldehyde 3-phosphate = D-erythrose 4-phosphate + beta-D-fructose 6-phosphate. Its pathway is carbohydrate degradation; pentose phosphate pathway; D-glyceraldehyde 3-phosphate and beta-D-fructose 6-phosphate from D-ribose 5-phosphate and D-xylulose 5-phosphate (non-oxidative stage): step 2/3. Transaldolase is important for the balance of metabolites in the pentose-phosphate pathway. This is Transaldolase from Thiobacillus denitrificans (strain ATCC 25259 / T1).